Reading from the N-terminus, the 742-residue chain is Tegument protein UL47 (742 aa).

Residues 1 to 10 (MDAARDGRPE) show a composition bias toward basic and acidic residues. 2 disordered regions span residues 1-128 (MDAA…TAHL) and 155-199 (EFPP…DDAA). Residues 10–30 (ERRPRRSGTYRTHPFQRPSAR) carry the Nuclear localization signal motif. The segment covering 18–37 (TYRTHPFQRPSARRSLLDAL) has biased composition (low complexity). Over residues 38 to 62 (RAADAEAAERPRVRRPRPDFQRPPD) the composition is skewed to basic and acidic residues. Over residues 63 to 88 (EDTSEDENVYDYIDGDSSDSADDYDS) the composition is skewed to acidic residues. The short motif at 95–122 (RGPNHGAGDAMDTDAPPERAPEGGAPQD) is the Nuclear export signal element. The Nuclear export signal motif lies at 485–495 (LSAYLTLFVAL).

This sequence belongs to the alphaherpesvirinae HHV-1 UL47 family. As to quaternary structure, interacts with US3 kinase. Interacts with UL31 and UL34; these interactions seem important for efficient virion nuclear egress. Interacts with UL41/VHS. Phosphorylated by US3. This phosphorylation is required for proper nuclear localization.

It localises to the virion tegument. The protein resides in the host nucleus. It is found in the host cytoplasm. Its function is as follows. Tegument protein that can bind to various RNA transcripts. Plays a role in the attenuation of selective viral and cellular mRNA degradation by modulating the activity of host shutoff RNase UL41/VHS. Also plays a role in the primary envelopment of virions in the perinuclear space, probably by interacting with two nuclear egress proteins UL31 and UL34. This Bos taurus (Bovine) protein is Tegument protein UL47.